A 354-amino-acid polypeptide reads, in one-letter code: Guanine nucleotide-binding protein alpha-3 subunit (354 aa).

A lipid anchor (N-myristoyl glycine) is attached at glycine 2. Cysteine 4 is lipidated: S-palmitoyl cysteine. Positions 33–354 (KECKILLLGS…TNALKDSGIL (322 aa)) constitute a G-alpha domain. Residues 36–49 (KILLLGSGESGKST) are G1 motif. GTP-binding positions include 41 to 48 (GSGESGKS), 177 to 183 (LRARSKT), 202 to 206 (DVGGQ), 271 to 274 (NKID), and alanine 326. 2 residues coordinate Mg(2+): serine 48 and threonine 183. The segment at 175 to 183 (DVLRARSKT) is G2 motif. Residues 198 to 207 (IHLFDVGGQR) are G3 motif. The segment at 267-274 (ILFLNKID) is G4 motif. Residues 324–329 (TQATDT) form a G5 motif region.

Belongs to the G-alpha family. G proteins are composed of 3 units; alpha, beta and gamma. The alpha chain contains the guanine nucleotide binding site.

In terms of biological role, guanine nucleotide-binding proteins (G proteins) are involved as modulators or transducers in various transmembrane signaling systems. This subunit is involved in cAMP regulation and morphogenesis. It is essential for dimorphic switching in haploid cells. The protein is Guanine nucleotide-binding protein alpha-3 subunit (FIL1) of Ustilago hordei (Barley covered smut fungus).